The chain runs to 384 residues: Chaperone protein DnaJ (384 aa).

The J domain occupies 5–70; it reads DYYEILGVTR…QKKRIYDTYG (66 aa). A CR-type zinc finger spans residues 134-212; it reads GTEKEIRLQT…CNGQGRTRQS (79 aa). Zn(2+) contacts are provided by Cys147, Cys150, Cys164, Cys167, Cys186, Cys189, Cys200, and Cys203. 4 CXXCXGXG motif repeats span residues 147-154, 164-171, 186-193, and 200-207; these read CEECNGSG, CPVCQGSG, CTRCQGMG, and CKTCNGQG. The disordered stretch occupies residues 352–384; the sequence is KEKSGEKVRKWPWSKRKDREKKSMAESTREART.

The protein belongs to the DnaJ family. Homodimer. It depends on Zn(2+) as a cofactor.

It localises to the cytoplasm. Its function is as follows. Participates actively in the response to hyperosmotic and heat shock by preventing the aggregation of stress-denatured proteins and by disaggregating proteins, also in an autonomous, DnaK-independent fashion. Unfolded proteins bind initially to DnaJ; upon interaction with the DnaJ-bound protein, DnaK hydrolyzes its bound ATP, resulting in the formation of a stable complex. GrpE releases ADP from DnaK; ATP binding to DnaK triggers the release of the substrate protein, thus completing the reaction cycle. Several rounds of ATP-dependent interactions between DnaJ, DnaK and GrpE are required for fully efficient folding. Also involved, together with DnaK and GrpE, in the DNA replication of plasmids through activation of initiation proteins. The polypeptide is Chaperone protein DnaJ (Syntrophobacter fumaroxidans (strain DSM 10017 / MPOB)).